A 221-amino-acid chain; its full sequence is Protein myomaker (221 aa).

The Extracellular segment spans residues 1–3 (MGT). A helical membrane pass occupies residues 4-24 (VVAKLLLPTLSSLAFLPTVSI). Topologically, residues 25–29 (ATKRR) are cytoplasmic. Residues 30 to 50 (FYMEAMVYLFTMFFVAFSHAC) traverse the membrane as a helical segment. The Extracellular segment spans residues 51-64 (DGPGLSVLCFMRRD). The helical transmembrane segment at 65-85 (ILEYFSIYGTALSMWVSLMAL) threads the bilayer. At 86–93 (ADFDEPQR) the chain is on the cytoplasmic side. A helical transmembrane segment spans residues 94–110 (STFTMLGVLTIAVRTFH). Residues 111–113 (DRW) are Extracellular-facing. Residues 114 to 134 (GYGVYSGPIGTATLIIAVKWL) form a helical membrane-spanning segment. At 135 to 153 (KKMKEKKGLYPDKSIYTQQ) the chain is on the cytoplasmic side. The chain crosses the membrane as a helical span at residues 154 to 174 (IGPGLCFGALALMLRFFFEEW). Position 175 (D175) is a topological domain, extracellular. The chain crosses the membrane as a helical span at residues 176–196 (YTYVHSFYHCALAMSFVLLLP). Residues 197–221 (KVNKKAGNAGAPAKLTFSTLCCTCV) lie on the Cytoplasmic side of the membrane. 2 S-palmitoyl cysteine lipidation sites follow: C217 and C218.

This sequence belongs to the TMEM8 family. As to quaternary structure, interacts with MYMX. In terms of processing, palmitoylated at the C-terminus; palmitoylation promotes localization to the Golgi apparatus. In terms of tissue distribution, specifically expressed in skeletal muscle during embryogenesis and adult muscle regeneration.

Its subcellular location is the cell membrane. It is found in the golgi apparatus membrane. In terms of biological role, myoblast-specific protein that mediates myoblast fusion, an essential step for the formation of multi-nucleated muscle fibers. Actively participates in the membrane fusion reaction by mediating the mixing of cell membrane lipids (hemifusion) upstream of MYMX. Acts independently of MYMX. Involved in skeletal muscle regeneration in response to injury by mediating the fusion of satellite cells, a population of muscle stem cells, with injured myofibers. Also involved in skeletal muscle hypertrophy, probably by mediating the fusion of satellite cells with myofibers. This Mus musculus (Mouse) protein is Protein myomaker.